Consider the following 151-residue polypeptide: Inorganic triphosphatase (151 aa).

In terms of domain architecture, CYTH spans 1–148; sequence MTEIERKFLV…KRYKNKALAL (148 aa). The active-site Proton acceptor is the Tyr-27.

As to quaternary structure, homodimer.

The enzyme catalyses triphosphate + H2O = phosphate + diphosphate. With respect to regulation, activated by magnesium and mangenese ions, and inhibited by calcium, zinc and copper ions. Involved in the hydrolysis of the beta-gamma-phosphoanhydride linkage of triphosphate-containing substrates (inorganic or nucleoside-linked). Catalyzes the hydrolysis of inorganic triphosphate (PPPi). The enzyme has a strong preference for linear PPPi compared with cyclic PPPi (cyclic trimetaphosphate) and to the linear P4. The longer chains polyphosphate are not hydrolyzed. It has only a slight thiamine triphosphatase (ThTPase) activity. Nucleoside triphosphatase activity is negligible in the presence of magnesium, but a small activity is observed in the presence of manganese, in particular with GTP. The chain is Inorganic triphosphatase from Nitrosomonas europaea (strain ATCC 19718 / CIP 103999 / KCTC 2705 / NBRC 14298).